A 339-amino-acid polypeptide reads, in one-letter code: 1-aminocyclopropane-1-carboxylate deaminase (339 aa).

Lysine 52 carries the N6-(pyridoxal phosphate)lysine modification. Serine 79 functions as the Nucleophile in the catalytic mechanism.

This sequence belongs to the ACC deaminase/D-cysteine desulfhydrase family. As to quaternary structure, homotrimer. Requires pyridoxal 5'-phosphate as cofactor.

It carries out the reaction 1-aminocyclopropane-1-carboxylate + H2O = 2-oxobutanoate + NH4(+). Functionally, catalyzes a cyclopropane ring-opening reaction, the irreversible conversion of 1-aminocyclopropane-1-carboxylate (ACC) to ammonia and alpha-ketobutyrate. Allows growth on ACC as a nitrogen source. The protein is 1-aminocyclopropane-1-carboxylate deaminase of Bradyrhizobium sp. (strain BTAi1 / ATCC BAA-1182).